The following is a 291-amino-acid chain: 4-hydroxy-tetrahydrodipicolinate synthase (291 aa).

T44 serves as a coordination point for pyruvate. Residue Y132 is the Proton donor/acceptor of the active site. Residue K160 is the Schiff-base intermediate with substrate of the active site. I202 contributes to the pyruvate binding site.

The protein belongs to the DapA family. Homotetramer; dimer of dimers.

The protein localises to the cytoplasm. The catalysed reaction is L-aspartate 4-semialdehyde + pyruvate = (2S,4S)-4-hydroxy-2,3,4,5-tetrahydrodipicolinate + H2O + H(+). It functions in the pathway amino-acid biosynthesis; L-lysine biosynthesis via DAP pathway; (S)-tetrahydrodipicolinate from L-aspartate: step 3/4. Functionally, catalyzes the condensation of (S)-aspartate-beta-semialdehyde [(S)-ASA] and pyruvate to 4-hydroxy-tetrahydrodipicolinate (HTPA). In Parvibaculum lavamentivorans (strain DS-1 / DSM 13023 / NCIMB 13966), this protein is 4-hydroxy-tetrahydrodipicolinate synthase.